Consider the following 89-residue polypeptide: Small ribosomal subunit protein uS15 (89 aa).

A compositionally biased stretch (basic and acidic residues) spans 1–20 (MSITAERKAELIKTHARGEA). The tract at residues 1 to 24 (MSITAERKAELIKTHARGEADTGS) is disordered.

This sequence belongs to the universal ribosomal protein uS15 family. In terms of assembly, part of the 30S ribosomal subunit. Forms a bridge to the 50S subunit in the 70S ribosome, contacting the 23S rRNA.

In terms of biological role, one of the primary rRNA binding proteins, it binds directly to 16S rRNA where it helps nucleate assembly of the platform of the 30S subunit by binding and bridging several RNA helices of the 16S rRNA. Its function is as follows. Forms an intersubunit bridge (bridge B4) with the 23S rRNA of the 50S subunit in the ribosome. The sequence is that of Small ribosomal subunit protein uS15 from Phenylobacterium zucineum (strain HLK1).